Reading from the N-terminus, the 66-residue chain is Nigrocin-2ISa (66 aa).

A signal peptide spans 1-22 (MFTLKKSMLLLFFLGTINLSLC). Positions 23 to 43 (QEERDAEEERRDEDNAKMEEI) are cleaved as a propeptide — removed in mature form. Cys60 and Cys66 are disulfide-bonded.

Expressed by the skin glands.

It is found in the secreted. Functionally, has antimicrobial activity against Gram-negative bacterium E.coli ATCC 8739 (MIC=25 ug), against Gram positive bacteria S.aureus ATCC 6538 (MIC=3.1 ug), methicillin-resistant S.aureus ATCC 43300 (MIC=12.5 ug), B.subtilis ATCC 6633 (MIC=12.5 ug) and against fungus C.albicans ATCC 90028 (MIC=50 ug). In Odorrana ishikawae (Ishikawa's frog), this protein is Nigrocin-2ISa.